A 378-amino-acid polypeptide reads, in one-letter code: Sperm microtubule associated protein 2 (378 aa).

Disordered stretches follow at residues Met-1–Ser-35 and Trp-47–Val-79. A compositionally biased stretch (polar residues) spans Trp-47–Glu-56. Over residues Asp-61 to Pro-77 the composition is skewed to acidic residues. THEG repeat units lie at residues Ala-113–Asn-132, Thr-179–Phe-198, Ser-217–Arg-236, Ala-253–Pro-272, Pro-285–Leu-304, Val-321–Arg-340, and Ala-355–Ile-374. Ser-290 bears the Phosphoserine mark.

As to quaternary structure, interacts with CCT5.

It localises to the nucleus. May be involved (but not essential) in spermatogenesis. This is Sperm microtubule associated protein 2 from Rattus norvegicus (Rat).